We begin with the raw amino-acid sequence, 275 residues long: MSGEGNLGKDHEEENEAPLPGFRFHPTDEELLGYYLRRKVENKTIKLELIKQIDIYKYDPWDLPRVSSVGEKEWYFFCMRGRKYRNSVRPNRVTGSGFWKATGIDKPVYSNLDCVGLKKSLVYYLGSAGKGTKTDWMMHEFRLPSTTKTDSPAQQAEVWTLCRIFKRVTSQRNPTILPPNRKPVITLTDTCSKTSSLDSDHTSHRTVDSMSHEPPLPQPQNPYWNQHIVGFNQPTYTGNDNNLLMSFWNGNGGDFIGDSASWDELRSVIDGNTKP.

Positions 1-24 (MSGEGNLGKDHEEENEAPLPGFRF) are disordered. In terms of domain architecture, NAC spans 18–167 (PLPGFRFHPT…VWTLCRIFKR (150 aa)). Residues 115 to 173 (VGLKKSLVYYLGSAGKGTKTDWMMHEFRLPSTTKTDSPAQQAEVWTLCRIFKRVTSQRN) mediate DNA binding. The disordered stretch occupies residues 191-219 (CSKTSSLDSDHTSHRTVDSMSHEPPLPQP). The span at 198 to 211 (DSDHTSHRTVDSMS) shows a compositional bias: basic and acidic residues.

In terms of tissue distribution, expressed in roots, root caps, cotyledons, tips and margin of young leaves, senescent regions of fully expanded leaves and floral tissues, including old sepals, petals, staments, mature anthers and pollen grains. Not detected in the abscission zone of open flowers, emerging lateral roots and root meristematic zones.

Its subcellular location is the nucleus. Functionally, transcription factor that binds to the 5'- RRYGCCGT-3' consensus core sequence. Central longevity regulator. Negative regulator of leaf senescence. Modulates cellular H(2)O(2) levels and enhances tolerance to various abiotic stresses through the regulation of DREB2A. The polypeptide is Transcription factor JUNGBRUNNEN 1 (JUB1) (Arabidopsis thaliana (Mouse-ear cress)).